A 256-amino-acid polypeptide reads, in one-letter code: Small ribosomal subunit protein eS1 (256 aa).

Alanine 2 carries the N-acetylalanine; partial modification.

The protein belongs to the eukaryotic ribosomal protein eS1 family. In terms of assembly, component of the small ribosomal subunit. Mature ribosomes consist of a small (40S) and a large (60S) subunit. The 40S subunit contains about 33 different proteins and 1 molecule of RNA (18S). The 60S subunit contains about 49 different proteins and 3 molecules of RNA (25S, 5.8S and 5S).

The protein resides in the cytoplasm. The polypeptide is Small ribosomal subunit protein eS1 (Coprinopsis cinerea (strain Okayama-7 / 130 / ATCC MYA-4618 / FGSC 9003) (Inky cap fungus)).